Consider the following 720-residue polypeptide: DNA replication licensing factor mcm7-B (720 aa).

A C4-type zinc finger spans residues 183–210 (CDQCGAETYQPIQSPTFMPLIMCPSREC). In terms of domain architecture, MCM spans 331–537 (FYEKLAASIA…NDLRLAQHIT (207 aa)). Tyrosine 344, glycine 383, alanine 385, lysine 386, serine 387, asparagine 488, arginine 513, and arginine 603 together coordinate ATP. The short motif at 512–515 (SRFD) is the Arginine finger element.

Belongs to the MCM family. Component of the mcm2-7 complex (RLF-M). The complex forms a toroidal hexameric ring with the proposed subunit order mcm2-mcm6-mcm4-mcm7-mcm3-mcm5. The heterodimer of mmcm3/mcm5 interacts with mcm4, mmcm6, mcm7 and weakly with mcm2. The N-terminus is required for interaction with mmcm3, though this interaction may not be direct, and remains in a complex with mmcm3 throughout the cell cycle. Begins to associate with zmcm6 at the neurula stage. Component of the replisome complex. Component of the CMG helicase complex, composed of the mcm2-7 complex, the GINS complex and cdc45. Ubiquitinated by traip when forks converge following formation of DNA interstrand cross-links. Short ubiquitin chains on mcm7 promote recruitment of DNA glycosylase neil3. If the interstrand cross-link cannot be cleaved by neil3, the ubiquitin chains continue to grow on mcm7, promoting the unloading of the CMG helicase complex by the vcp/p97 ATPase.

The protein resides in the nucleus. The protein localises to the chromosome. The catalysed reaction is ATP + H2O = ADP + phosphate + H(+). Functionally, acts as a component of the mcm2-7 complex (mcm complex) which is the putative replicative helicase essential for 'once per cell cycle' DNA replication initiation and elongation in eukaryotic cells. The active ATPase sites in the mcm2-7 ring are formed through the interaction surfaces of two neighboring subunits such that a critical structure of a conserved arginine finger motif is provided in trans relative to the ATP-binding site of the Walker A box of the adjacent subunit. The six ATPase active sites, however, are likely to contribute differentially to the complex helicase activity. The existence of maternal and zygotic forms of mcm3 and mcm6 suggests that specific forms of mcm2-7 complexes may be used during different stages of development. This chain is DNA replication licensing factor mcm7-B (mcm7-b), found in Xenopus laevis (African clawed frog).